A 332-amino-acid polypeptide reads, in one-letter code: Olfactory receptor 10G6 (332 aa).

The Extracellular segment spans residues 1–46; the sequence is MLEGVEHLLLLLLLTDVNSKELQSGNQTSVSHFILVGLHHPPQLGA. Residue Asn26 is glycosylated (N-linked (GlcNAc...) asparagine). The helical transmembrane segment at 47-67 threads the bilayer; that stretch reads PLFLAFLVIYLLTVSGNGLII. Residues 68–75 are Cytoplasmic-facing; sequence LTVLVDIR. Residues 76-96 traverse the membrane as a helical segment; it reads LHRPMCLFLCHLSFLDMTISC. Residues 97-120 lie on the Extracellular side of the membrane; it reads AIVPKMLAGFLLGSRIISFGGCVI. A disulfide bridge links Cys118 with Cys210. A helical membrane pass occupies residues 121–141; the sequence is QLFSFHFLGCTECFLYTLMAY. Topologically, residues 142–160 are cytoplasmic; sequence DRFLAICKPLHYATIMTHR. Residues 161–181 form a helical membrane-spanning segment; that stretch reads VCNSLALGTWLGGTIHSLFQT. The Extracellular segment spans residues 182–218; the sequence is SFVFRLPFCGPNRVDYIFCDIPAMLRLACADTAINEL. A helical membrane pass occupies residues 219–238; that stretch reads VTFADIGFLALTCFMLILTS. Residues 239 to 258 lie on the Cytoplasmic side of the membrane; that stretch reads YGYIVAAILRIPSADGRRNA. The chain crosses the membrane as a helical span at residues 259 to 279; that stretch reads FSTCAAHLTVVIVYYVPCTFI. Topologically, residues 280–290 are extracellular; sequence YLRPCSQEPLD. The helical transmembrane segment at 291-311 threads the bilayer; sequence GVVAVFYTVITPLLNSIIYTL. Residues 312-332 are Cytoplasmic-facing; that stretch reads CNKEMKAALQRLGGHKEVQPH.

This sequence belongs to the G-protein coupled receptor 1 family.

It is found in the cell membrane. In terms of biological role, odorant receptor. The chain is Olfactory receptor 10G6 (OR10G6) from Homo sapiens (Human).